The following is a 548-amino-acid chain: MALHVPKAPGFAQMLKEGAKHFSGLEEAVYRNIQACKELAQTTRTAYGPNGMNKMVINHLEKLFVTNDAATILRELEVQHPAAKMIVMASHMQEQEVGDGTNFVLVFAGALLELAEELLRLGLSVSEVIEGYEIACKKAHEILPDLVCCSAKNLRDVDEVSSLLHTSVMSKQYGNEVFLAKLIAQACVSIFPDSGHFNVDNIRVCKILGSGVHSSSVLHGMVFKKETEGDVTSVKDAKIAVYSCPFDGMITETKGTVLIKSAEELMNFSKGEENLMDAQVKAIADTGANVVVTGGRVADMALHYANKYNIMLVRLNSKWDLRRLCKTVGATALPRLNPPVLEEMGHCDSVYLSEVGDTQVVVFKHEKEDGAISTIVLRGSTDNLMDDIERAVDDGVNTFKVLTRDKRLVPGGGATEIELAKQITSYGETCPGLEQYAIKKFAEAFEAIPRALAENSGVKANEVISKLYAVHQEGNKNVGLDIEAEVPAVKDMLEAGVLDTYLGKYWAIKLATNAAVTVLRVDQIIMAKPAGGPKPPSGKKDWDEDQND.

Position 2 is an N-acetylalanine (Ala-2). Ser-23 carries the phosphoserine modification. Tyr-30 carries the phosphotyrosine modification. Positions 47 and 48 each coordinate ADP. Residue Asp-99 participates in Mg(2+) binding. The ADP site is built by Gly-100, Thr-101, Asn-102, and Phe-103. Residues Gly-100, Thr-101, and Asn-102 each coordinate ATP. A Phosphoserine modification is found at Ser-162. Residues Met-169, Ser-170, and Lys-171 each coordinate ADP. ATP-binding residues include Ser-170 and Lys-171. Glycyl lysine isopeptide (Lys-Gly) (interchain with G-Cter in SUMO2) cross-links involve residues Lys-224, Lys-254, and Lys-260. Ser-269 and Ser-317 each carry phosphoserine. N6-acetyllysine is present on residues Lys-318 and Lys-400. Gly-412 is a binding site for ADP. Gly-412 provides a ligand contact to ATP. Residue Lys-459 forms a Glycyl lysine isopeptide (Lys-Gly) (interchain with G-Cter in SUMO1) linkage. Lys-466 is subject to N6-acetyllysine. Asp-499 serves as a coordination point for ADP. ATP-binding residues include Asp-499 and Lys-504. Tyr-505 is modified (phosphotyrosine). Residues 529–548 are disordered; it reads PAGGPKPPSGKKDWDEDQND. Lys-534 participates in a covalent cross-link: Glycyl lysine isopeptide (Lys-Gly) (interchain with G-Cter in SUMO2). Ser-537 is subject to Phosphoserine. Lys-539 is covalently cross-linked (Glycyl lysine isopeptide (Lys-Gly) (interchain with G-Cter in SUMO2)).

The protein belongs to the TCP-1 chaperonin family. Component of the chaperonin-containing T-complex (TRiC), a hexadecamer composed of two identical back-to-back stacked rings enclosing a protein folding chamber. Each ring is made up of eight different subunits: TCP1/CCT1, CCT2, CCT3, CCT4, CCT5, CCT6A/CCT6, CCT7, CCT8. Interacts with PACRG. Interacts with DNAAF4. Interacts with synaptic plasticity regulator PANTS.

The protein localises to the cytoplasm. It localises to the cytoskeleton. The protein resides in the microtubule organizing center. Its subcellular location is the centrosome. It is found in the cilium basal body. The catalysed reaction is ATP + H2O = ADP + phosphate + H(+). Functionally, component of the chaperonin-containing T-complex (TRiC), a molecular chaperone complex that assists the folding of actin, tubulin and other proteins upon ATP hydrolysis. The TRiC complex mediates the folding of WRAP53/TCAB1, thereby regulating telomere maintenance. As part of the TRiC complex may play a role in the assembly of BBSome, a complex involved in ciliogenesis regulating transports vesicles to the cilia. This chain is T-complex protein 1 subunit theta (CCT8), found in Bos taurus (Bovine).